The sequence spans 392 residues: uncharacterized protein (392 aa).

This sequence belongs to the peptidase M24 family.

This is an uncharacterized protein from Sinorhizobium fredii (strain NBRC 101917 / NGR234).